The chain runs to 136 residues: Large ribosomal subunit protein bL20 (136 aa).

This sequence belongs to the bacterial ribosomal protein bL20 family.

Binds directly to 23S ribosomal RNA and is necessary for the in vitro assembly process of the 50S ribosomal subunit. It is not involved in the protein synthesizing functions of that subunit. The chain is Large ribosomal subunit protein bL20 from Tropheryma whipplei (strain TW08/27) (Whipple's bacillus).